The sequence spans 183 residues: Regulatory protein RecX (183 aa).

Over residues 1–12 (MTSFPHPSTSES) the composition is skewed to polar residues. The disordered stretch occupies residues 1 to 26 (MTSFPHPSTSESGPDPDSEPNREEQA).

This sequence belongs to the RecX family.

It localises to the cytoplasm. Functionally, modulates RecA activity. The polypeptide is Regulatory protein RecX (Mycobacterium sp. (strain JLS)).